Reading from the N-terminus, the 316-residue chain is Transcription initiation factor IIB (316 aa).

The segment at 11 to 42 adopts a TFIIB-type zinc-finger fold; the sequence is PRVTCPNHPDAILVEDYRAGDMICPECGLVVG. Zn(2+)-binding residues include cysteine 15, histidine 18, cysteine 34, and cysteine 37. Phosphoserine occurs at positions 70, 76, and 92. 2 repeat units span residues 124–200 and 218–294. Lysine 152, arginine 154, lysine 189, and lysine 196 together coordinate DNA. The tract at residues 189 to 193 is core promoter DNA-binding; sequence KEIGR. Lysine 238 bears the N6-acetyllysine; by autocatalysis mark. The tract at residues 244-316 is necessary for TATA box-bound TBP complex formation; sequence LVPGRSPISV…DTPVDKLPQL (73 aa). Arginine 248 contributes to the DNA binding site. Positions 249-252 are core promoter DNA-binding; sequence SPIS. DNA is bound by residues lysine 272, alanine 281, threonine 284, arginine 286, and arginine 290. Residues 283 to 286 form a core promoter DNA-binding region; sequence VTIR.

Belongs to the TFIIB family. Found in a ternary complex with TATA box-bound TBP. Part of a TFIID-containing RNA polymerase II pre-initiation complex (PIC) that is composed of TBP and at least GTF2A1, GTF2A2, GTF2E1, GTF2E2, GTF2F1, GTF2H2, GTF2H3, GTF2H4, GTF2H5, GTF2B, TCEA1, ERCC2, ERCC3, TAF1, TAF2, TAF3, TAF4, TAF5, TAF6, TAF7, TAF8, TAF9, TAF10, TAF11, TAF12 and TAF13. Associates with TFIID-TFIIA (DA complex) to form TFIID-TFIIA-TFIIB (DAB complex), which is then recognized by RNA polymerase II (Pol II). Found in a RNA polymerase II initiation complex. Interacts (via C-terminus) with TBP; this interaction with TATA box-bound TBP guides Pol II into the PIC. Interacts (via N-terminus) with Pol II. Interacts (via C-terminus) with SSU72; this interaction is inhibited by SYMPK. Interacts with NR2F1; this interaction is direct. Interacts with PGR. Interacts with ESR1. Interacts with GTF2F1 (via C-terminus and preferentially via acetylated form); this interaction prevents binding of GTF2B to GTF2F2. Interacts with GTF2F2 (via N-terminus); this interaction is inhibited in presence of GTF2F1. Interacts with the transcription elongation factor TCEA2. Interacts with HSF1 (via transactivation domain). Interacts with GPBP1. In terms of processing, acetylated. Autoacetylated; autoacetylation at Lys-238 stimulates transcription activation.

The protein localises to the nucleus. It is found in the chromosome. It carries out the reaction L-lysyl-[protein] + acetyl-CoA = N(6)-acetyl-L-lysyl-[protein] + CoA + H(+). Functionally, general transcription factor that plays a role in transcription initiation by RNA polymerase II (Pol II). Involved in the pre-initiation complex (PIC) formation and Pol II recruitment at promoter DNA. Together with the TATA box-bound TBP forms the core initiation complex and provides a bridge between TBP and the Pol II-TFIIF complex. Released from the PIC early following the onset of transcription during the initiation and elongation transition and reassociates with TBP during the next transcription cycle. Associates with chromatin to core promoter-specific regions. Binds to two distinct DNA core promoter consensus sequence elements in a TBP-independent manner; these IIB-recognition elements (BREs) are localized immediately upstream (BREu), 5'-[GC][GC][GA]CGCC-3', and downstream (BREd), 5'-[GA]T[TGA][TG][GT][TG][TG]-3', of the TATA box element. Modulates transcription start site selection. Also exhibits autoacetyltransferase activity that contributes to the activated transcription. The protein is Transcription initiation factor IIB of Mus musculus (Mouse).